The following is a 442-amino-acid chain: 3-phosphoshikimate 1-carboxyvinyltransferase (442 aa).

3 residues coordinate 3-phosphoshikimate: Lys-23, Ser-24, and Arg-28. Lys-23 serves as a coordination point for phosphoenolpyruvate. Residues Gly-95 and Arg-123 each coordinate phosphoenolpyruvate. 3-phosphoshikimate-binding residues include Ser-167, Gln-169, Asp-315, and Lys-342. A phosphoenolpyruvate-binding site is contributed by Gln-169. The active-site Proton acceptor is the Asp-315. Residues Arg-346 and Arg-390 each coordinate phosphoenolpyruvate.

It belongs to the EPSP synthase family. In terms of assembly, monomer.

It localises to the cytoplasm. It carries out the reaction 3-phosphoshikimate + phosphoenolpyruvate = 5-O-(1-carboxyvinyl)-3-phosphoshikimate + phosphate. It functions in the pathway metabolic intermediate biosynthesis; chorismate biosynthesis; chorismate from D-erythrose 4-phosphate and phosphoenolpyruvate: step 6/7. Catalyzes the transfer of the enolpyruvyl moiety of phosphoenolpyruvate (PEP) to the 5-hydroxyl of shikimate-3-phosphate (S3P) to produce enolpyruvyl shikimate-3-phosphate and inorganic phosphate. The protein is 3-phosphoshikimate 1-carboxyvinyltransferase of Dichelobacter nodosus (strain VCS1703A).